Reading from the N-terminus, the 182-residue chain is Core-binding factor subunit beta (182 aa).

Position 173 is a phosphoserine (Ala-173).

It belongs to the CBF-beta family. In terms of assembly, heterodimer with RUNX1, RUNX2 and RUNX3. Interacts with COPRS. Found in a complex with PRMT5 and RUNX1. (Microbial infection) Interacts with HIV-1 Vif; forming an active cullin-5-RING E3 ubiquitin-protein ligase complex (ECS complex).

It localises to the nucleus. Functionally, forms the heterodimeric complex core-binding factor (CBF) with RUNX family proteins (RUNX1, RUNX2, and RUNX3). RUNX members modulate the transcription of their target genes through recognizing the core consensus binding sequence 5'-TGTGGT-3', or very rarely, 5'-TGCGGT-3', within their regulatory regions via their runt domain, while CBFB is a non-DNA-binding regulatory subunit that allosterically enhances the sequence-specific DNA-binding capacity of RUNX. The heterodimers bind to the core site of a number of enhancers and promoters, including murine leukemia virus, polyomavirus enhancer, T-cell receptor enhancers, LCK, IL3 and GM-CSF promoters. CBF complexes repress ZBTB7B transcription factor during cytotoxic (CD8+) T cell development. They bind to RUNX-binding sequence within the ZBTB7B locus acting as transcriptional silencer and allowing for cytotoxic T cell differentiation. (Microbial infection) Following infection, hijacked by the HIV-1 Vif protein, leading to the formation a cullin-5-RING E3 ubiquitin-protein ligase complex (ECS complex) that catalyzes ubiquitination and degradation of APOBEC3F and APOBEC3G. The complex can also ubiquitinate APOBEC3H to some extent. Association with HIV-1 Vif protein also inhibits the transcription coactivator activity of CBFB/CBF-beta. The sequence is that of Core-binding factor subunit beta (CBFB) from Homo sapiens (Human).